Consider the following 341-residue polypeptide: Phenylalanine--tRNA ligase alpha subunit (341 aa).

Glutamate 254 lines the Mg(2+) pocket.

It belongs to the class-II aminoacyl-tRNA synthetase family. Phe-tRNA synthetase alpha subunit type 1 subfamily. In terms of assembly, tetramer of two alpha and two beta subunits. The cofactor is Mg(2+).

The protein localises to the cytoplasm. It carries out the reaction tRNA(Phe) + L-phenylalanine + ATP = L-phenylalanyl-tRNA(Phe) + AMP + diphosphate + H(+). In Mycoplasma pneumoniae (strain ATCC 29342 / M129 / Subtype 1) (Mycoplasmoides pneumoniae), this protein is Phenylalanine--tRNA ligase alpha subunit (pheS).